A 164-amino-acid polypeptide reads, in one-letter code: UPF0303 protein Smed_2872 (164 aa).

The protein belongs to the UPF0303 family.

This chain is UPF0303 protein Smed_2872, found in Sinorhizobium medicae (strain WSM419) (Ensifer medicae).